The sequence spans 339 residues: Zinc transporter 3 (339 aa).

An N-terminal signal peptide occupies residues 1–25; it reads MKTKNVKLLFFFFSVSLLLIAVVNA. The Extracellular segment spans residues 26-54; that stretch reads AEGHSHGGPKCECSHEDDHENKAGARKYK. A helical transmembrane segment spans residues 55–75; that stretch reads IAAIPTVLIAGIIGVLFPLLG. The Cytoplasmic portion of the chain corresponds to 76–86; the sequence is KVFPSLRPETC. A helical membrane pass occupies residues 87–107; the sequence is FFFVTKAFAAGVILATGFMHV. Topologically, residues 108 to 123 are extracellular; that stretch reads LPEAYEMLNSPCLTSE. The helical transmembrane segment at 124–144 threads the bilayer; sequence AWEFPFTGFIAMIAAILTLSV. Residues 145–184 are Cytoplasmic-facing; sequence DTFATSSFYKSHCKASKRVSDGETGESSVDSEKVQILRTR. The helical transmembrane segment at 185–205 threads the bilayer; the sequence is VIAQVLELGIIVHSVVIGISL. At 206–216 the chain is on the extracellular side; it reads GASQSPDAAKA. The chain crosses the membrane as a helical span at residues 217–237; it reads LFIALMFHQCFEGLGLGGCIA. Over 238–247 the chain is Cytoplasmic; it reads QGKFKCLSVT. A helical membrane pass occupies residues 248–268; sequence IMSTFFAITTPIGIVVGMGIA. Over 269-278 the chain is Extracellular; the sequence is NSYDESSPTA. A helical membrane pass occupies residues 279 to 299; that stretch reads LIVQGVLNAASAGILIYMSLV. The Cytoplasmic portion of the chain corresponds to 300–315; it reads DLLAADFTHPKMQSNT. The chain crosses the membrane as a helical span at residues 316–336; that stretch reads GLQIMAHIALLLGAGLMSLLA. At 337-339 the chain is on the extracellular side; that stretch reads KWA.

It belongs to the ZIP transporter (TC 2.A.5) family. As to expression, expressed predominantly in the roots of zinc-deficient plants.

It is found in the cell membrane. In terms of biological role, mediates zinc uptake from the rhizosphere. May also transport other divalent cations. This Arabidopsis thaliana (Mouse-ear cress) protein is Zinc transporter 3 (ZIP3).